A 201-amino-acid polypeptide reads, in one-letter code: Dephospho-CoA kinase (201 aa).

The region spanning threonine 4–lysine 201 is the DPCK domain. Alanine 12–threonine 17 is a binding site for ATP.

The protein belongs to the CoaE family.

It localises to the cytoplasm. It catalyses the reaction 3'-dephospho-CoA + ATP = ADP + CoA + H(+). It participates in cofactor biosynthesis; coenzyme A biosynthesis; CoA from (R)-pantothenate: step 5/5. Functionally, catalyzes the phosphorylation of the 3'-hydroxyl group of dephosphocoenzyme A to form coenzyme A. The polypeptide is Dephospho-CoA kinase (Geobacillus kaustophilus (strain HTA426)).